We begin with the raw amino-acid sequence, 199 residues long: Dephospho-CoA kinase (199 aa).

The region spanning 3 to 199 is the DPCK domain; the sequence is VLGLTGSIGM…AAAKMPRRRD (197 aa). 11–16 is a binding site for ATP; sequence GMGKST.

The protein belongs to the CoaE family.

It localises to the cytoplasm. It carries out the reaction 3'-dephospho-CoA + ATP = ADP + CoA + H(+). Its pathway is cofactor biosynthesis; coenzyme A biosynthesis; CoA from (R)-pantothenate: step 5/5. In terms of biological role, catalyzes the phosphorylation of the 3'-hydroxyl group of dephosphocoenzyme A to form coenzyme A. The polypeptide is Dephospho-CoA kinase (Rhodopseudomonas palustris (strain ATCC BAA-98 / CGA009)).